Consider the following 169-residue polypeptide: Ribosome maturation factor RimM (169 aa).

In terms of domain architecture, PRC barrel spans 97–169 (EDEYYWADLV…TITADWGLDY (73 aa)).

Belongs to the RimM family. In terms of assembly, binds ribosomal protein uS19.

The protein localises to the cytoplasm. In terms of biological role, an accessory protein needed during the final step in the assembly of 30S ribosomal subunit, possibly for assembly of the head region. Essential for efficient processing of 16S rRNA. May be needed both before and after RbfA during the maturation of 16S rRNA. It has affinity for free ribosomal 30S subunits but not for 70S ribosomes. This is Ribosome maturation factor RimM from Neisseria gonorrhoeae (strain ATCC 700825 / FA 1090).